Here is a 447-residue protein sequence, read N- to C-terminus: Adenylosuccinate synthetase (447 aa).

GTP contacts are provided by residues 12 to 18 (GDEGKGK) and 40 to 42 (GHT). The Proton acceptor role is filled by D13. Positions 13 and 40 each coordinate Mg(2+). Residues 13–16 (DEGK), 38–41 (NAGH), T128, R142, Q223, T238, and R302 contribute to the IMP site. H41 serves as the catalytic Proton donor. Residue 298 to 304 (TTTGRRR) coordinates substrate. GTP is bound by residues R304, 330–332 (KLD), and 412–414 (SLG).

Belongs to the adenylosuccinate synthetase family. In terms of assembly, homodimer. Mg(2+) serves as cofactor.

Its subcellular location is the cytoplasm. It carries out the reaction IMP + L-aspartate + GTP = N(6)-(1,2-dicarboxyethyl)-AMP + GDP + phosphate + 2 H(+). It participates in purine metabolism; AMP biosynthesis via de novo pathway; AMP from IMP: step 1/2. Its function is as follows. Plays an important role in the de novo pathway of purine nucleotide biosynthesis. Catalyzes the first committed step in the biosynthesis of AMP from IMP. This Thermosynechococcus vestitus (strain NIES-2133 / IAM M-273 / BP-1) protein is Adenylosuccinate synthetase.